A 248-amino-acid polypeptide reads, in one-letter code: Ubiquinone biosynthesis O-methyltransferase (248 aa).

Residues R41, G72, D93, and M136 each contribute to the S-adenosyl-L-methionine site.

This sequence belongs to the methyltransferase superfamily. UbiG/COQ3 family.

It catalyses the reaction a 3-demethylubiquinol + S-adenosyl-L-methionine = a ubiquinol + S-adenosyl-L-homocysteine + H(+). The enzyme catalyses a 3-(all-trans-polyprenyl)benzene-1,2-diol + S-adenosyl-L-methionine = a 2-methoxy-6-(all-trans-polyprenyl)phenol + S-adenosyl-L-homocysteine + H(+). It participates in cofactor biosynthesis; ubiquinone biosynthesis. O-methyltransferase that catalyzes the 2 O-methylation steps in the ubiquinone biosynthetic pathway. The polypeptide is Ubiquinone biosynthesis O-methyltransferase (Rhizobium rhizogenes (strain K84 / ATCC BAA-868) (Agrobacterium radiobacter)).